Here is a 1365-residue protein sequence, read N- to C-terminus: Glucosyltransferase-S (1365 aa).

The segment at residues 1–36 is a signal peptide (or 37); sequence MEKNLRYKLHKVKKQWVAIGVTTVTLSFLAGGQVVA. Composition is skewed to polar residues over residues 80-89 and 127-146; these read DQTATSQVSP and RQSA…TSDQ. Disordered stretches follow at residues 80–99 and 127–152; these read DQTA…DNQV and RQSA…HLET. Cell wall-binding repeat units lie at residues 146 to 166 and 168 to 187; these read QPGH…NGQR and KNYS…QTGE. The tract at residues 200–1000 is catalytic; approximate; the sequence is QDNVPDSYQA…KPIDPSVKIT (801 aa). Cell wall-binding repeat units lie at residues 1052 to 1071, 1073 to 1092, 1093 to 1112, 1113 to 1133, 1136 to 1159, 1160 to 1179, 1234 to 1253, 1278 to 1298, 1299 to 1318, and 1343 to 1362; these read ANGF…NGQE, KNRF…DGKM, ATGK…NGKQ, LKEG…NGRT, NKGF…DGTI, AIGL…YGYQ, LTGE…NGVQ, GKGW…SGQV, LTGL…KGIQ, and RDRW…NGLA.

This sequence belongs to the glycosyl hydrolase 70 family.

It catalyses the reaction [(1-&gt;6)-alpha-D-glucosyl](n) + sucrose = [(1-&gt;6)-alpha-D-glucosyl](n+1) + D-fructose. With respect to regulation, glucan synthesis by GTF-S is independent of primer glucan unlike GTF-I. Functionally, production of extracellular glucans, that are thought to play a key role in the development of the dental plaque because of their ability to adhere to smooth surfaces and mediate the aggregation of bacterial cells and food debris. The chain is Glucosyltransferase-S (gtfS) from Streptococcus downei (Streptococcus sobrinus).